The following is a 77-amino-acid chain: Defensin-like protein 161 (77 aa).

The signal sequence occupies residues 1–27 (MAKLSCSYLLVFMLVFSAILMVEKVEG). Disulfide bonds link C30–C77, C40–C59, C45–C71, and C49–C73.

It belongs to the DEFL family.

It localises to the secreted. The sequence is that of Defensin-like protein 161 (LCR27) from Arabidopsis thaliana (Mouse-ear cress).